The sequence spans 503 residues: ATP synthase subunit beta (503 aa).

157–164 (GGAGVGKT) lines the ATP pocket.

The protein belongs to the ATPase alpha/beta chains family. F-type ATPases have 2 components, CF(1) - the catalytic core - and CF(0) - the membrane proton channel. CF(1) has five subunits: alpha(3), beta(3), gamma(1), delta(1), epsilon(1). CF(0) has three main subunits: a(1), b(2) and c(9-12). The alpha and beta chains form an alternating ring which encloses part of the gamma chain. CF(1) is attached to CF(0) by a central stalk formed by the gamma and epsilon chains, while a peripheral stalk is formed by the delta and b chains.

The protein localises to the cell inner membrane. The enzyme catalyses ATP + H2O + 4 H(+)(in) = ADP + phosphate + 5 H(+)(out). Functionally, produces ATP from ADP in the presence of a proton gradient across the membrane. The catalytic sites are hosted primarily by the beta subunits. In Flavobacterium johnsoniae (strain ATCC 17061 / DSM 2064 / JCM 8514 / BCRC 14874 / CCUG 350202 / NBRC 14942 / NCIMB 11054 / UW101) (Cytophaga johnsonae), this protein is ATP synthase subunit beta.